The sequence spans 1050 residues: Inositol hexakisphosphate kinase 1 (1050 aa).

Disordered stretches follow at residues 87 to 117 (KITRSEATPKSVPEGLQVSEKKNNPDTLSSS), 129 to 177 (PAIK…IQNV), 269 to 319 (RQEN…DNEH), and 396 to 423 (SDLDQENNGKNDTSNENKDIEVNHNNND). Serine 150 carries the phosphoserine modification. Polar residues predominate over residues 156–173 (KQQSHQPQVLHHQTSLKP). The span at 290-306 (ESIKEKPNTFEQDKEGE) shows a compositional bias: basic and acidic residues. Acidic residues predominate over residues 307–316 (QADEEEDEGD). Serine 396 carries the phosphoserine modification. Over residues 402 to 417 (NNGKNDTSNENKDIEV) the composition is skewed to basic and acidic residues. A Phosphoserine modification is found at serine 469. Over residues 508 to 522 (NDSYFSSSSSHNSCS) the composition is skewed to low complexity. 2 disordered regions span residues 508–539 (NDSYFSSSSSHNSCSFGERGNTNKLKRRDSGS) and 562–625 (RKRN…PNLQ). Serine 537, serine 539, serine 566, serine 583, serine 589, serine 646, serine 664, and serine 670 each carry phosphoserine. The segment covering 566-624 (SNTTTMGNHNARLGSSPSFLTQKSRASSHDASNTSMKTLGDSSSQASLQMDDSKVNPNL) has biased composition (polar residues). 772-780 (PCALDLKMG) contacts substrate.

It belongs to the inositol phosphokinase (IPK) family.

The protein resides in the cytoplasm. The enzyme catalyses 1D-myo-inositol hexakisphosphate + ATP = 5-diphospho-1D-myo-inositol 1,2,3,4,6-pentakisphosphate + ADP. The catalysed reaction is 1-diphospho-1D-myo-inositol 2,3,4,5,6-pentakisphosphate + ATP + H(+) = 1,5-bis(diphospho)-1D-myo-inositol 2,3,4,6-tetrakisphosphate + ADP. Functionally, converts inositol hexakisphosphate (InsP6) to diphosphoinositol pentakisphosphate (InsP7/PP-InsP5). Involved in phosphate regulation and polyphosphate accumulation. Required for resistance to salt stress, cell wall integrity, vacuole morphogenesis, and telomere maintenance. In Saccharomyces cerevisiae (strain ATCC 204508 / S288c) (Baker's yeast), this protein is Inositol hexakisphosphate kinase 1 (KCS1).